The following is an 892-amino-acid chain: Alanine--tRNA ligase (892 aa).

His594, His598, Cys702, and His706 together coordinate Zn(2+).

It belongs to the class-II aminoacyl-tRNA synthetase family. It depends on Zn(2+) as a cofactor.

The protein resides in the cytoplasm. It carries out the reaction tRNA(Ala) + L-alanine + ATP = L-alanyl-tRNA(Ala) + AMP + diphosphate. Catalyzes the attachment of alanine to tRNA(Ala) in a two-step reaction: alanine is first activated by ATP to form Ala-AMP and then transferred to the acceptor end of tRNA(Ala). Also edits incorrectly charged Ser-tRNA(Ala) and Gly-tRNA(Ala) via its editing domain. The polypeptide is Alanine--tRNA ligase (Pyrobaculum aerophilum (strain ATCC 51768 / DSM 7523 / JCM 9630 / CIP 104966 / NBRC 100827 / IM2)).